The following is a 148-amino-acid chain: Lysozyme C (148 aa).

Residues 1 to 18 form the signal peptide; sequence MKALTILGLVLLSVTVQG. The 130-residue stretch at 19–148 folds into the C-type lysozyme domain; the sequence is KIFERCELAR…VSQYVKGCGV (130 aa). Disulfide bonds link Cys24-Cys146, Cys48-Cys134, Cys83-Cys99, and Cys95-Cys113. Residues Glu53 and Asp71 contribute to the active site.

Belongs to the glycosyl hydrolase 22 family. Monomer.

It is found in the secreted. It carries out the reaction Hydrolysis of (1-&gt;4)-beta-linkages between N-acetylmuramic acid and N-acetyl-D-glucosamine residues in a peptidoglycan and between N-acetyl-D-glucosamine residues in chitodextrins.. Functionally, lysozymes have primarily a bacteriolytic function; those in tissues and body fluids are associated with the monocyte-macrophage system and enhance the activity of immunoagents. Also plays a role in digestion in this species. In Semnopithecus entellus (Northern plains gray langur), this protein is Lysozyme C (LYZ).